A 518-amino-acid polypeptide reads, in one-letter code: Arrestin-related trafficking adapter 10 (518 aa).

A Glycyl lysine isopeptide (Lys-Gly) (interchain with G-Cter in ubiquitin) cross-link involves residue K118.

This sequence belongs to the ART10 family. Interacts with RSP5. Ubiquitinated by RSP5.

Its subcellular location is the cytoplasm. Its function is as follows. May regulate endocytosis by recruiting RSP5 ubiquitin ligase activity to specific plasma membrane proteins in response to extracellular stimuli. This Saccharomyces cerevisiae (strain ATCC 204508 / S288c) (Baker's yeast) protein is Arrestin-related trafficking adapter 10 (ART10).